Here is a 297-residue protein sequence, read N- to C-terminus: Ribosomal RNA small subunit methyltransferase H (297 aa).

S-adenosyl-L-methionine contacts are provided by residues 37 to 39 (GGH), Glu-56, Phe-87, Asp-102, and His-109.

This sequence belongs to the methyltransferase superfamily. RsmH family.

It localises to the cytoplasm. It carries out the reaction cytidine(1402) in 16S rRNA + S-adenosyl-L-methionine = N(4)-methylcytidine(1402) in 16S rRNA + S-adenosyl-L-homocysteine + H(+). In terms of biological role, specifically methylates the N4 position of cytidine in position 1402 (C1402) of 16S rRNA. The protein is Ribosomal RNA small subunit methyltransferase H of Borrelia recurrentis (strain A1).